The chain runs to 122 residues: MIQPQTHLNVADNSGARKLMCIRIIGASNRRYAYIGDIVVAVIKEAVPNTPLERSEVIRAVIVRTCKELKRSNGIIIQYDDNAAVVIDQEGNPKGTRIFCAIARELRQFNFTKIVSLAPEIL.

The protein belongs to the universal ribosomal protein uL14 family. Part of the 50S ribosomal subunit.

It localises to the plastid. The protein resides in the chloroplast. Its function is as follows. Binds to 23S rRNA. In Lotus japonicus (Lotus corniculatus var. japonicus), this protein is Large ribosomal subunit protein uL14c.